Consider the following 336-residue polypeptide: Ketol-acid reductoisomerase (NADP(+)) 1 (336 aa).

Positions Ala2–Thr181 constitute a KARI N-terminal Rossmann domain. NADP(+)-binding positions include Tyr25–Gln28, Arg48, Ser52, and Asp82–Gln85. Residue His107 is part of the active site. Gly133 provides a ligand contact to NADP(+). Residues Thr182–Val327 form the KARI C-terminal knotted domain. Mg(2+) is bound by residues Asp190, Glu194, Glu226, and Glu230. Ser251 lines the substrate pocket.

The protein belongs to the ketol-acid reductoisomerase family. Requires Mg(2+) as cofactor.

It carries out the reaction (2R)-2,3-dihydroxy-3-methylbutanoate + NADP(+) = (2S)-2-acetolactate + NADPH + H(+). It catalyses the reaction (2R,3R)-2,3-dihydroxy-3-methylpentanoate + NADP(+) = (S)-2-ethyl-2-hydroxy-3-oxobutanoate + NADPH + H(+). Its pathway is amino-acid biosynthesis; L-isoleucine biosynthesis; L-isoleucine from 2-oxobutanoate: step 2/4. The protein operates within amino-acid biosynthesis; L-valine biosynthesis; L-valine from pyruvate: step 2/4. Functionally, involved in the biosynthesis of branched-chain amino acids (BCAA). Catalyzes an alkyl-migration followed by a ketol-acid reduction of (S)-2-acetolactate (S2AL) to yield (R)-2,3-dihydroxy-isovalerate. In the isomerase reaction, S2AL is rearranged via a Mg-dependent methyl migration to produce 3-hydroxy-3-methyl-2-ketobutyrate (HMKB). In the reductase reaction, this 2-ketoacid undergoes a metal-dependent reduction by NADPH to yield (R)-2,3-dihydroxy-isovalerate. This Bacillus anthracis protein is Ketol-acid reductoisomerase (NADP(+)) 1.